A 592-amino-acid polypeptide reads, in one-letter code: Actin-binding protein (592 aa).

Position 2 is an N-acetylalanine (Ala-2). The ADF-H domain maps to 7–136; sequence DYTTHSREID…DENELLMKIS (130 aa). Residues 144–155 show a composition bias toward polar residues; it reads SIQTSSKQQGKA. The tract at residues 144-541 is disordered; sequence SIQTSSKQQG…KENPWATAEY (398 aa). Phosphothreonine is present on Thr-165. Ser-167 and Ser-169 each carry phosphoserine. Thr-181 carries the post-translational modification Phosphothreonine. Phosphoserine is present on Ser-183. Repeat 1 spans residues 200–209; that stretch reads DDDWNEPELK. The interval 200 to 575 is 3 X 10 AA approximate repeats (acidic); it reads DDDWNEPELK…DDDWWLGELE (376 aa). 2 stretches are compositionally biased toward basic and acidic residues: residues 237–248 and 270–279; these read IAEEKAKEDPRL and NESKLKRDSE. The segment covering 280 to 296 has biased composition (polar residues); the sequence is FNSFLGTTKPPSMTESS. Over residues 297–312 the composition is skewed to basic and acidic residues; that stretch reads LKNDDDKVIKGFRNEK. Ser-313 bears the Phosphoserine mark. Composition is skewed to basic and acidic residues over residues 332-341 and 350-359; these read TKAEAPKPEV and PDVKDLKSKF. Residues Ser-365 and Ser-389 each carry the phosphoserine modification. Basic and acidic residues predominate over residues 398–414; the sequence is EPVKAEEAEQPKTDYKK. A compositionally biased stretch (acidic residues) spans 427 to 446; it reads DNEEEPEENDDDWDDDEDEA. Copy 2 of the repeat occupies 436–445; that stretch reads DDDWDDDEDE. Position 458 is a phosphoserine (Ser-458). Lys-464 is covalently cross-linked (Glycyl lysine isopeptide (Lys-Gly) (interchain with G-Cter in ubiquitin)). Ser-481 bears the Phosphoserine mark. Residues 490 to 505 show a composition bias toward acidic residues; it reads APEQAPEEEIEEEAEE. Over residues 506–516 the composition is skewed to low complexity; the sequence is AAPQLPSRSSA. The 61-residue stretch at 532-592 folds into the SH3 domain; the sequence is KENPWATAEY…FPSNYVSLGN (61 aa). The stretch at 566–575 is repeat 3; sequence DDDWWLGELE.

The protein belongs to the ABP1 family. As to quaternary structure, binds F-actin, but not G-actin. Interacts with the ARP2/3 complex. Interacts with APP1, ARK1, PRK1, SCP1, SRV2 and YIR003W via its SH3 domain. Interacts with the SH3 domain of RVS167 and with SLA1. In terms of processing, the actin depolymerizing factor homology (ADF) domain mediates actin filament binding.

The protein localises to the cytoplasm. It localises to the cytoskeleton. It is found in the actin patch. In terms of biological role, regulates ARP2/3 complex-mediated actin assembly. Recruits ARP2/3 complex to sides of preexisting actin filaments, which may promote nucleation or stabilization of filament branches. Binds to actin filaments, but not actin monomers. Actin binding is required for ARP2/3 complex activation. May also have a role in linking the actin cytoskeleton to endocytosis. recruits components of the endocytotic machinery to cortical actin patches, known sites of endocytosis. The protein is Actin-binding protein (ABP1) of Saccharomyces cerevisiae (strain ATCC 204508 / S288c) (Baker's yeast).